We begin with the raw amino-acid sequence, 234 residues long: Ponticulin-like protein J (234 aa).

An N-terminal signal peptide occupies residues 1-20 (MRLLNNLILMVVLFVAVSNA). 4 N-linked (GlcNAc...) asparagine glycosylation sites follow: N19, N143, N166, and N206. The segment at 115-213 (TIKCGTLPPD…SDNETAEGNN (99 aa)) is disordered. Low complexity predominate over residues 154–195 (KSTPKSPSTPKTNNSNEDSDLTTSSSDSSSSTKSSPKSKSST). The GPI-like-anchor amidated asparagine moiety is linked to residue N212. The N-linked (GlcNAc...) asparagine glycan is linked to N213. Residues 213–234 (NASSNIATFSLVIISLLVASLF) constitute a propeptide, removed in mature form.

It belongs to the ponticulin family. In terms of processing, the GPI-like-anchor contains a phosphoceramide group, rather than a phosphatidyl group.

The protein localises to the cell membrane. Its function is as follows. Binds F-actin and nucleates actin assembly. This chain is Ponticulin-like protein J (ponJ), found in Dictyostelium discoideum (Social amoeba).